The sequence spans 160 residues: Lipoprotein signal peptidase (160 aa).

Helical transmembrane passes span 13–33 (IYIT…RLII), 72–92 (WFLS…ITKL), and 104–124 (SLII…GFVV). Residues Asp-125 and Asp-143 contribute to the active site. A helical transmembrane segment spans residues 134-154 (WHFATFNIADCSIFIGIIILM).

Belongs to the peptidase A8 family.

The protein resides in the cell inner membrane. It catalyses the reaction Release of signal peptides from bacterial membrane prolipoproteins. Hydrolyzes -Xaa-Yaa-Zaa-|-(S,diacylglyceryl)Cys-, in which Xaa is hydrophobic (preferably Leu), and Yaa (Ala or Ser) and Zaa (Gly or Ala) have small, neutral side chains.. The protein operates within protein modification; lipoprotein biosynthesis (signal peptide cleavage). Its function is as follows. This protein specifically catalyzes the removal of signal peptides from prolipoproteins. The sequence is that of Lipoprotein signal peptidase from Buchnera aphidicola subsp. Acyrthosiphon pisum (strain 5A).